The chain runs to 1119 residues: SH3 and PX domain-containing protein 2A (1119 aa).

One can recognise a PX domain in the interval arginine 4–isoleucine 128. SH3 domains are found at residues methionine 149 to glycine 208 and serine 249 to aspartate 308. Disordered stretches follow at residues serine 388–arginine 429, alanine 494–alanine 595, serine 641–valine 815, asparagine 914–asparagine 941, and arginine 957–threonine 1004. Residues threonine 445–lysine 504 form the SH3 3 domain. Composition is skewed to basic and acidic residues over residues proline 581–isoleucine 590 and glycine 688–isoleucine 718. Low complexity predominate over residues threonine 779–serine 802. Positions arginine 806–valine 815 are enriched in basic and acidic residues. The 60-residue stretch at histidine 812–histidine 871 folds into the SH3 4 domain. The SH3 5 domain occupies asparagine 1058–lysine 1119.

This sequence belongs to the SH3PXD2 family. Tyrosine phosphorylated.

Its subcellular location is the cytoplasm. The protein resides in the cell projection. The protein localises to the podosome. In terms of biological role, adapter protein involved in invadopodia and podosome formation and extracellular matrix degradation. The polypeptide is SH3 and PX domain-containing protein 2A (sh3pxd2a) (Danio rerio (Zebrafish)).